Here is a 191-residue protein sequence, read N- to C-terminus: Flagellar transcriptional regulator FlhC (191 aa).

Positions 139, 142, 159, and 162 each coordinate Zn(2+).

The protein belongs to the FlhC family. In terms of assembly, heterohexamer composed of two FlhC and four FlhD subunits. Each FlhC binds a FlhD dimer, forming a heterotrimer, and a hexamer assembles by dimerization of two heterotrimers. It depends on Zn(2+) as a cofactor.

The protein resides in the cytoplasm. Functions in complex with FlhD as a master transcriptional regulator that regulates transcription of several flagellar and non-flagellar operons by binding to their promoter region. Activates expression of class 2 flagellar genes, including fliA, which is a flagellum-specific sigma factor that turns on the class 3 genes. Also regulates genes whose products function in a variety of physiological pathways. This is Flagellar transcriptional regulator FlhC from Enterobacter cloacae subsp. cloacae (strain ATCC 13047 / DSM 30054 / NBRC 13535 / NCTC 10005 / WDCM 00083 / NCDC 279-56).